Reading from the N-terminus, the 377-residue chain is Queuine tRNA-ribosyltransferase (377 aa).

Asp-89 serves as the catalytic Proton acceptor. Residues 89 to 93 (DSGGF), Asp-143, Gln-188, and Gly-215 each bind substrate. The interval 246 to 252 (GVGKPED) is RNA binding. Catalysis depends on Asp-265, which acts as the Nucleophile. The tract at residues 270 to 274 (TRNAR) is RNA binding; important for wobble base 34 recognition. 4 residues coordinate Zn(2+): Cys-303, Cys-305, Cys-308, and His-334.

The protein belongs to the queuine tRNA-ribosyltransferase family. In terms of assembly, homodimer. Within each dimer, one monomer is responsible for RNA recognition and catalysis, while the other monomer binds to the replacement base PreQ1. Zn(2+) serves as cofactor.

It catalyses the reaction 7-aminomethyl-7-carbaguanine + guanosine(34) in tRNA = 7-aminomethyl-7-carbaguanosine(34) in tRNA + guanine. Its pathway is tRNA modification; tRNA-queuosine biosynthesis. Its function is as follows. Catalyzes the base-exchange of a guanine (G) residue with the queuine precursor 7-aminomethyl-7-deazaguanine (PreQ1) at position 34 (anticodon wobble position) in tRNAs with GU(N) anticodons (tRNA-Asp, -Asn, -His and -Tyr). Catalysis occurs through a double-displacement mechanism. The nucleophile active site attacks the C1' of nucleotide 34 to detach the guanine base from the RNA, forming a covalent enzyme-RNA intermediate. The proton acceptor active site deprotonates the incoming PreQ1, allowing a nucleophilic attack on the C1' of the ribose to form the product. After dissociation, two additional enzymatic reactions on the tRNA convert PreQ1 to queuine (Q), resulting in the hypermodified nucleoside queuosine (7-(((4,5-cis-dihydroxy-2-cyclopenten-1-yl)amino)methyl)-7-deazaguanosine). The polypeptide is Queuine tRNA-ribosyltransferase (Acinetobacter baumannii (strain SDF)).